The following is a 480-amino-acid chain: 2-phosphoxylose phosphatase 1 (480 aa).

Residues 1-6 lie on the Cytoplasmic side of the membrane; it reads MLYRNR. The helical; Signal-anchor for type II membrane protein transmembrane segment at 7–27 threads the bilayer; that stretch reads FLVLLALAGLLAFLSLSLQFF. Residues 28–480 are Lumenal-facing; that stretch reads HLIPVSTTKN…YYDACHGEGA (453 aa). Histidine 97 functions as the Nucleophile in the catalytic mechanism. Asparagine 194, asparagine 305, and asparagine 354 each carry an N-linked (GlcNAc...) asparagine glycan. Aspartate 379 functions as the Proton donor in the catalytic mechanism.

The protein belongs to the histidine acid phosphatase family. Interacts with B3GAT3; the interaction increases the 2-phosphoxylose phosphatase activity of PXYLP1 during completion of linkage region formation in a B3GAT3-mediated manner.

It is found in the golgi apparatus membrane. The enzyme catalyses 3-O-[beta-D-GlcA-(1-&gt;3)-beta-D-Gal-(1-&gt;3)-beta-D-Gal-(1-&gt;4)-beta-D-2-O-P-Xyl]-L-seryl-[protein] + H2O = 3-O-(beta-D-GlcA-(1-&gt;3)-beta-D-Gal-(1-&gt;3)-beta-D-Gal-(1-&gt;4)-beta-D-Xyl)-L-seryl-[protein] + phosphate. Functionally, responsible for the 2-O-dephosphorylation of xylose in the glycosaminoglycan-protein linkage region of proteoglycans thereby regulating the amount of mature glycosaminoglycan (GAG) chains. Sulfated glycosaminoglycans (GAGs), including heparan sulfate and chondroitin sulfate, are synthesized on the so-called common GAG-protein linkage region (GlcUAbeta1-3Galbeta1-3Galbeta1-4Xylbeta1-O-Ser) of core proteins, which is formed by the stepwise addition of monosaccharide residues by the respective specific glycosyltransferases. Xylose 2-O-dephosphorylation during completion of linkage region formation is a prerequisite for the initiation and efficient elongation of the repeating disaccharide region of GAG chains. The polypeptide is 2-phosphoxylose phosphatase 1 (Rattus norvegicus (Rat)).